Consider the following 327-residue polypeptide: MAEGLVLKGTMRAHTDMVTAIATPIDNADIIVSASRDKSIILWKLTKDDKAYGVAQRRLTGHSHFVEDVVLSSDGQFALSGSWDGELRLWDLAAGVSTRRFVGHTKDVLSVAFSLDNRQIVSASRDRTIKLWNTLGECKYTISEGGEGHRDWVSCVRFSPNTLQPTIVSASWDKTVKVWNLSNCKLRSTLAGHTGYVSTVAVSPDGSLCASGGKDGVVLLWDLAEGKKLYSLEANSVIHALCFSPNRYWLCAATEHGIKIWDLESKSIVEDLKVDLKAEAEKADNSGPAATKRKVIYCTSLNWSADGSTLFSGYTDGVIRVWGIGRY.

7 WD repeats span residues Ala-13–Lys-44, Gly-61–Asp-91, Gly-103–Asn-133, Gly-148–Asn-180, Gly-192–Asp-222, Glu-233–Asp-262, and Arg-293–Gly-323.

It belongs to the WD repeat G protein beta family. Ribosomal protein RACK1 subfamily. As to quaternary structure, homodimer and heterodimer with RACK1B or RACK1C. Interacts with NUDT7. Interacts with GB1, MEKK1, MKK4, MKK5, MPK3 and MPK6, but not with GPA1 or MPK4. Interacts with OFUT20. Widely expressed.

It is found in the cytoplasm. Its subcellular location is the nucleus. In terms of biological role, major component of the RACK1 regulatory proteins that play a role in multiple signal transduction pathways. Involved in multiple hormone responses and developmental processes. MAPK cascade scaffolding protein involved in the protease IV and ArgC signaling pathway but not the flg22 pathway. This Arabidopsis thaliana (Mouse-ear cress) protein is Small ribosomal subunit protein RACK1z.